Consider the following 235-residue polypeptide: Ribonuclease 3 (235 aa).

The 129-residue stretch at 7–135 folds into the RNase III domain; sequence FAALEARLGH…VVAAVYLDGG (129 aa). Glu-48 serves as a coordination point for Mg(2+). Asp-52 is a catalytic residue. Positions 121 and 124 each coordinate Mg(2+). Residue Glu-124 is part of the active site. One can recognise a DRBM domain in the interval 160 to 229; sequence DPKTVLQEWA…ASAFLAREGV (70 aa).

Belongs to the ribonuclease III family. In terms of assembly, homodimer. Mg(2+) serves as cofactor.

Its subcellular location is the cytoplasm. It carries out the reaction Endonucleolytic cleavage to 5'-phosphomonoester.. In terms of biological role, digests double-stranded RNA. Involved in the processing of primary rRNA transcript to yield the immediate precursors to the large and small rRNAs (23S and 16S). Processes some mRNAs, and tRNAs when they are encoded in the rRNA operon. Processes pre-crRNA and tracrRNA of type II CRISPR loci if present in the organism. This is Ribonuclease 3 from Azorhizobium caulinodans (strain ATCC 43989 / DSM 5975 / JCM 20966 / LMG 6465 / NBRC 14845 / NCIMB 13405 / ORS 571).